We begin with the raw amino-acid sequence, 372 residues long: GTPase Obg (372 aa).

The Obg domain occupies 1–159 (MKFIDEARIE…RMLKLELKVL (159 aa)). Positions 128–147 (LHFKSSTNRAPRQKTDGKPG) are disordered. The region spanning 160–334 (ADVGLLGMPN…LVYAIHDYLV (175 aa)) is the OBG-type G domain. Residues 166–173 (GMPNAGKS), 191–195 (FTTLA), 213–216 (DIPG), 284–287 (NKLD), and 315–317 (SAL) each bind GTP. Residues Ser173 and Thr193 each coordinate Mg(2+).

The protein belongs to the TRAFAC class OBG-HflX-like GTPase superfamily. OBG GTPase family. In terms of assembly, monomer. The cofactor is Mg(2+).

Its subcellular location is the cytoplasm. An essential GTPase which binds GTP, GDP and possibly (p)ppGpp with moderate affinity, with high nucleotide exchange rates and a fairly low GTP hydrolysis rate. Plays a role in control of the cell cycle, stress response, ribosome biogenesis and in those bacteria that undergo differentiation, in morphogenesis control. This chain is GTPase Obg, found in Burkholderia pseudomallei (strain 668).